We begin with the raw amino-acid sequence, 208 residues long: Uracil phosphoribosyltransferase (208 aa).

5-phospho-alpha-D-ribose 1-diphosphate-binding positions include Arg78, Arg103, and 130–138 (DPMLATGGS). Uracil is bound by residues Ile193 and 198–200 (GDA). Asp199 contributes to the 5-phospho-alpha-D-ribose 1-diphosphate binding site.

It belongs to the UPRTase family. Mg(2+) is required as a cofactor.

It carries out the reaction UMP + diphosphate = 5-phospho-alpha-D-ribose 1-diphosphate + uracil. Its pathway is pyrimidine metabolism; UMP biosynthesis via salvage pathway; UMP from uracil: step 1/1. Its activity is regulated as follows. Allosterically activated by GTP. Functionally, catalyzes the conversion of uracil and 5-phospho-alpha-D-ribose 1-diphosphate (PRPP) to UMP and diphosphate. This Escherichia coli O139:H28 (strain E24377A / ETEC) protein is Uracil phosphoribosyltransferase.